Here is a 346-residue protein sequence, read N- to C-terminus: Inositol 2-dehydrogenase (346 aa).

It belongs to the Gfo/Idh/MocA family. As to quaternary structure, homotetramer.

The catalysed reaction is myo-inositol + NAD(+) = scyllo-inosose + NADH + H(+). In terms of biological role, involved in the oxidation of myo-inositol (MI) to 2-keto-myo-inositol (2KMI or 2-inosose). This chain is Inositol 2-dehydrogenase, found in Rhodococcus erythropolis (strain PR4 / NBRC 100887).